The chain runs to 542 residues: Chaperonin GroEL (542 aa).

ATP contacts are provided by residues 29-32 (TMGP), 86-90 (DGTTT), Gly413, 476-478 (NAA), and Asp492. The segment at 521–542 (KPDPNANNQAPAAPQGGMGGMM) is disordered. Over residues 524 to 535 (PNANNQAPAAPQ) the composition is skewed to low complexity.

It belongs to the chaperonin (HSP60) family. In terms of assembly, forms a cylinder of 14 subunits composed of two heptameric rings stacked back-to-back. Interacts with the co-chaperonin GroES.

The protein localises to the cytoplasm. The catalysed reaction is ATP + H2O + a folded polypeptide = ADP + phosphate + an unfolded polypeptide.. In terms of biological role, together with its co-chaperonin GroES, plays an essential role in assisting protein folding. The GroEL-GroES system forms a nano-cage that allows encapsulation of the non-native substrate proteins and provides a physical environment optimized to promote and accelerate protein folding. This chain is Chaperonin GroEL, found in Limosilactobacillus reuteri subsp. reuteri (strain JCM 1112) (Lactobacillus reuteri).